The chain runs to 130 residues: Small ribosomal subunit protein uS8 (130 aa).

Belongs to the universal ribosomal protein uS8 family. Part of the 30S ribosomal subunit. Contacts proteins S5 and S12.

Its function is as follows. One of the primary rRNA binding proteins, it binds directly to 16S rRNA central domain where it helps coordinate assembly of the platform of the 30S subunit. This is Small ribosomal subunit protein uS8 from Shewanella pealeana (strain ATCC 700345 / ANG-SQ1).